The sequence spans 264 residues: uncharacterized protein (264 aa).

Lysine 15–threonine 22 serves as a coordination point for ATP.

This sequence belongs to the ParA family. MinD subfamily.

This is an uncharacterized protein from Methanocaldococcus jannaschii (strain ATCC 43067 / DSM 2661 / JAL-1 / JCM 10045 / NBRC 100440) (Methanococcus jannaschii).